We begin with the raw amino-acid sequence, 197 residues long: MTDQTPTLLLASSSPFRRQLLDKLKLDFIHQSPDIDESRHEDESPTALVMRLAREKALALADQHPNTLIIGSDQVAVIGNQVLGKPGDRDTAIRQLSAASGKRVSFLTGLCLLNTATGRSQVVCDPFHVQFRTLKPAQIERYVDIEQPLNCAGSFKSEGLGIVLFKALEGRDPNTLVGLPLIILTEFLAAEGVQLPL.

Asp-73 (proton acceptor) is an active-site residue.

This sequence belongs to the Maf family. YceF subfamily. A divalent metal cation serves as cofactor.

The protein resides in the cytoplasm. The catalysed reaction is N(7)-methyl-GTP + H2O = N(7)-methyl-GMP + diphosphate + H(+). Nucleoside triphosphate pyrophosphatase that hydrolyzes 7-methyl-GTP (m(7)GTP). May have a dual role in cell division arrest and in preventing the incorporation of modified nucleotides into cellular nucleic acids. This chain is 7-methyl-GTP pyrophosphatase, found in Alcanivorax borkumensis (strain ATCC 700651 / DSM 11573 / NCIMB 13689 / SK2).